Consider the following 1039-residue polypeptide: Multidrug resistance protein MdtB (1039 aa).

The next 12 membrane-spanning stretches (helical) occupy residues 16-36 (FILR…AGII), 342-362 (DVQF…YVFL), 373-393 (VAVP…GFSI), 396-416 (LTLM…IVVI), 440-460 (IGFT…PLLF), 472-492 (FAVT…TLTP), 537-557 (WLTL…YLLI), 863-883 (LGGT…VLGV), 888-908 (FIHP…ALLA), 911-931 (MAGS…IGIV), 968-988 (ILMT…STGV), and 1002-1022 (GGLV…YLLF).

The protein belongs to the resistance-nodulation-cell division (RND) (TC 2.A.6) family. MdtB subfamily. Part of a tripartite efflux system composed of MdtA, MdtB and MdtC. MdtB forms a heteromultimer with MdtC.

The protein resides in the cell inner membrane. In Serratia proteamaculans (strain 568), this protein is Multidrug resistance protein MdtB.